Reading from the N-terminus, the 279-residue chain is Probable endonuclease 4 (279 aa).

Zn(2+) contacts are provided by H67, H107, E144, D177, H180, H214, D227, H229, and E259.

It belongs to the AP endonuclease 2 family. The cofactor is Zn(2+).

The catalysed reaction is Endonucleolytic cleavage to 5'-phosphooligonucleotide end-products.. Functionally, endonuclease IV plays a role in DNA repair. It cleaves phosphodiester bonds at apurinic or apyrimidinic (AP) sites, generating a 3'-hydroxyl group and a 5'-terminal sugar phosphate. The chain is Probable endonuclease 4 from Sulfurihydrogenibium sp. (strain YO3AOP1).